Here is a 500-residue protein sequence, read N- to C-terminus: Cytochrome P450 monooxygenase 103 (500 aa).

A run of 2 helical transmembrane segments spans residues 1-21 (MAST…YLLR) and 26-46 (PLYA…IGAL). N-linked (GlcNAc...) asparagine glycosylation occurs at asparagine 374. Cysteine 441 contacts heme.

It belongs to the cytochrome P450 family. Heme serves as cofactor.

It is found in the membrane. Its pathway is secondary metabolite biosynthesis. Functionally, cytochrome P450 monooxygenase that is able to use testosterone as a substrate for oxidation. This is Cytochrome P450 monooxygenase 103 from Postia placenta (strain ATCC 44394 / Madison 698-R) (Brown rot fungus).